The primary structure comprises 218 residues: MRLRNKPWAQKLVAEHPEVILNEPDPDKKINWEERFEDFSKPLAIEIGSGKGQFITTLAKEHPEMNFIGVELQTTAAGMILRTKLEEKIDNLQLMCADAANIAMYLPENSVDIVYLNFSDPWPKTRHEKRRLTYKSFLDKYRQILKPEGHLEFKTDNRGLFEYSLVSLNNYGMKFDYVSLDLHHADDEIFERNVETEYEHKFAAKGNPIYCLHAHFVK.

Residues Glu-46, Glu-71, Asp-98, and Asp-120 each coordinate S-adenosyl-L-methionine. Asp-120 is an active-site residue. Lys-124 provides a ligand contact to substrate. The segment at 126–131 (RHEKRR) is interaction with RNA. Substrate contacts are provided by residues Asp-156 and 196-199 (TEYE).

It belongs to the class I-like SAM-binding methyltransferase superfamily. TrmB family.

It catalyses the reaction guanosine(46) in tRNA + S-adenosyl-L-methionine = N(7)-methylguanosine(46) in tRNA + S-adenosyl-L-homocysteine. Its pathway is tRNA modification; N(7)-methylguanine-tRNA biosynthesis. In terms of biological role, catalyzes the formation of N(7)-methylguanine at position 46 (m7G46) in tRNA. This is tRNA (guanine-N(7)-)-methyltransferase from Lactobacillus johnsonii (strain CNCM I-12250 / La1 / NCC 533).